A 62-amino-acid polypeptide reads, in one-letter code: Conotoxin Im5.1 (62 aa).

Positions 1–19 (MYCLPVFIILLLLISSAPS) are cleaved as a signal peptide. The propeptide occupies 20–48 (TPPQPRNKDRVHLISLLDNHKQILQRDWN). A Tryptophan amide modification is found at Trp-60.

Belongs to the conotoxin T superfamily. Contains 2 disulfide bonds that can be either 'C1-C3, C2-C4' or 'C1-C4, C2-C3', since these disulfide connectivities have been observed for conotoxins with cysteine framework V (for examples, see AC P0DQQ7 and AC P81755). Expressed by the venom duct.

The protein localises to the secreted. The protein is Conotoxin Im5.1 of Conus imperialis (Imperial cone).